The primary structure comprises 230 residues: Large ribosomal subunit protein uL1 (230 aa).

The protein belongs to the universal ribosomal protein uL1 family. As to quaternary structure, part of the 50S ribosomal subunit.

In terms of biological role, binds directly to 23S rRNA. The L1 stalk is quite mobile in the ribosome, and is involved in E site tRNA release. Protein L1 is also a translational repressor protein, it controls the translation of the L11 operon by binding to its mRNA. In Thermoanaerobacter sp. (strain X514), this protein is Large ribosomal subunit protein uL1.